The chain runs to 710 residues: DNA-directed RNA polymerase III subunit RPC5 (710 aa).

The segment covering 146 to 155 (DAKHREREAA) has biased composition (basic and acidic residues). The disordered stretch occupies residues 146–169 (DAKHREREAANEAGDSSQDEAEED). Phosphoserine is present on residues Ser161 and Ser162. A Glycyl lysine isopeptide (Lys-Gly) (interchain with G-Cter in SUMO2) cross-link involves residue Lys171. Ser192 carries the phosphoserine modification. At Tyr224 the chain carries Phosphotyrosine. Residue Lys432 forms a Glycyl lysine isopeptide (Lys-Gly) (interchain with G-Cter in SUMO2) linkage. Residue Lys498 forms a Glycyl lysine isopeptide (Lys-Gly) (interchain with G-Cter in SUMO1); alternate linkage. Lys498 is covalently cross-linked (Glycyl lysine isopeptide (Lys-Gly) (interchain with G-Cter in SUMO2); alternate). The segment at 498 to 526 (KEEPLSEEEADGAELEAEEEEPMDTAPST) is disordered. Over residues 502–520 (LSEEEADGAELEAEEEEPM) the composition is skewed to acidic residues. Phosphoserine is present on Ser503. Residues 558–710 (NPVACELKAF…MWYLKGTVQS (153 aa)) are required for Pol III complex stability. Lys661 participates in a covalent cross-link: Glycyl lysine isopeptide (Lys-Gly) (interchain with G-Cter in SUMO2).

Component of the RNA polymerase III complex consisting of at least 17 subunits: a ten-subunit horseshoe-shaped catalytic core composed of POLR3A/RPC1, POLR3B/RPC2, POLR1C/RPAC1, POLR1D/RPAC2, POLR3K/RPC10, POLR2E/RPABC1, POLR2F/RPABC2, POLR2H/RPABC3, POLR2K/RPABC4 and POLR2L/RPABC5; the stalk composed of two subunits POLR3H/RPC8 and CRCP/RPC9, forming a structural mobile part that protrudes out of the core and functions primarily in transcription initiation; and additional subunits homologous to general transcription factors of the RNA polymerase II machinery, POLR3D/RPC4-POLR3E/RPC5 heterodimer and POLR3/CRPC3-POLR3F/RPC6-POLR3G/RPC7 heterotrimer.

The protein localises to the nucleus. Functionally, DNA-dependent RNA polymerase catalyzes the transcription of DNA into RNA using the four ribonucleoside triphosphates as substrates. Specific peripheric component of RNA polymerase III (Pol III) which synthesizes small non-coding RNAs including 5S rRNA, snRNAs, tRNAs and miRNAs from at least 500 distinct genomic loci. Assembles with POLR3D/RPC4 forming a subcomplex that binds the Pol III core. Enables recruitment of Pol III at transcription initiation site and drives transcription initiation from both type 2 and type 3 DNA promoters. Required for efficient transcription termination and reinitiation. Plays a key role in sensing and limiting infection by intracellular bacteria and DNA viruses. Acts as a nuclear and cytosolic DNA sensor involved in innate immune response. Can sense non-self dsDNA that serves as template for transcription into dsRNA. The non-self RNA polymerase III transcripts, such as Epstein-Barr virus-encoded RNAs (EBERs) induce type I interferon and NF-kappa-B through the RIG-I pathway. The protein is DNA-directed RNA polymerase III subunit RPC5 of Mus musculus (Mouse).